A 189-amino-acid chain; its full sequence is UPF0494 membrane protein C977.06 (189 aa).

3 helical membrane-spanning segments follow: residues 78 to 98 (WPLL…NFEV), 120 to 140 (IWGP…GLIY), and 148 to 168 (AIPL…VAMV).

It belongs to the UPF0494 family.

The protein resides in the membrane. The chain is UPF0494 membrane protein C977.06 from Schizosaccharomyces pombe (strain 972 / ATCC 24843) (Fission yeast).